We begin with the raw amino-acid sequence, 202 residues long: Helix-loop-helix protein 10 (202 aa).

2 disordered regions span residues 1 to 26 and 83 to 112; these read MESS…NSEL and QNKS…GKID. Residues 17-26 are compositionally biased toward polar residues; it reads STGNHGNSEL. The tract at residues 121 to 134 is basic motif; that stretch reads TRRYEANARERNRV. Residues 121–172 form the bHLH domain; it reads TRRYEANARERNRVQQLSKMFDQLRVCLPIEDDAKISKLATLKVASSYIGYL. Residues 135–172 form a helix-loop-helix motif region; it reads QQLSKMFDQLRVCLPIEDDAKISKLATLKVASSYIGYL.

Heterodimer with hlh-2. As to expression, expressed in intestine, neurons in head, body and tail, and in body hypodermis, and vulva. Expressed in neurons in the male-specific genital sensilla (simple sense organs) known as rays.

The protein resides in the nucleus. The protein localises to the cytoplasm. Probable transcription factor which binds the E box motif 5'-CA[TC][AG]TG-3'. This chain is Helix-loop-helix protein 10, found in Caenorhabditis elegans.